Here is a 113-residue protein sequence, read N- to C-terminus: Nucleoid-associated protein Syncc9902_0023 (113 aa).

This sequence belongs to the YbaB/EbfC family. As to quaternary structure, homodimer.

The protein resides in the cytoplasm. It is found in the nucleoid. In terms of biological role, binds to DNA and alters its conformation. May be involved in regulation of gene expression, nucleoid organization and DNA protection. This chain is Nucleoid-associated protein Syncc9902_0023, found in Synechococcus sp. (strain CC9902).